A 132-amino-acid chain; its full sequence is D-ribose pyranase (132 aa).

The active-site Proton donor is histidine 20. Residues aspartate 28, histidine 99, and 121 to 123 (YSN) contribute to the substrate site.

It belongs to the RbsD / FucU family. RbsD subfamily. As to quaternary structure, homodecamer.

Its subcellular location is the cytoplasm. The enzyme catalyses beta-D-ribopyranose = beta-D-ribofuranose. Its pathway is carbohydrate metabolism; D-ribose degradation; D-ribose 5-phosphate from beta-D-ribopyranose: step 1/2. Functionally, catalyzes the interconversion of beta-pyran and beta-furan forms of D-ribose. The chain is D-ribose pyranase from Pseudomonas putida (strain W619).